The sequence spans 99 residues: Aspartyl/glutamyl-tRNA(Asn/Gln) amidotransferase subunit C (99 aa).

The protein belongs to the GatC family. As to quaternary structure, heterotrimer of A, B and C subunits.

The catalysed reaction is L-glutamyl-tRNA(Gln) + L-glutamine + ATP + H2O = L-glutaminyl-tRNA(Gln) + L-glutamate + ADP + phosphate + H(+). The enzyme catalyses L-aspartyl-tRNA(Asn) + L-glutamine + ATP + H2O = L-asparaginyl-tRNA(Asn) + L-glutamate + ADP + phosphate + 2 H(+). Allows the formation of correctly charged Asn-tRNA(Asn) or Gln-tRNA(Gln) through the transamidation of misacylated Asp-tRNA(Asn) or Glu-tRNA(Gln) in organisms which lack either or both of asparaginyl-tRNA or glutaminyl-tRNA synthetases. The reaction takes place in the presence of glutamine and ATP through an activated phospho-Asp-tRNA(Asn) or phospho-Glu-tRNA(Gln). The sequence is that of Aspartyl/glutamyl-tRNA(Asn/Gln) amidotransferase subunit C from Corynebacterium efficiens (strain DSM 44549 / YS-314 / AJ 12310 / JCM 11189 / NBRC 100395).